The following is a 712-amino-acid chain: Polyribonucleotide nucleotidyltransferase (712 aa).

Residues D485 and D491 each contribute to the Mg(2+) site. The 64-residue stretch at 552–615 (PRIHTIKINP…EAIRRIEAIT (64 aa)) folds into the KH domain. The S1 motif domain occupies 621–689 (NRIYEGKVVR…RQGRVRLSIK (69 aa)).

The protein belongs to the polyribonucleotide nucleotidyltransferase family. In terms of assembly, component of the RNA degradosome, which is a multiprotein complex involved in RNA processing and mRNA degradation. Mg(2+) is required as a cofactor.

Its subcellular location is the cytoplasm. It carries out the reaction RNA(n+1) + phosphate = RNA(n) + a ribonucleoside 5'-diphosphate. In terms of biological role, involved in mRNA degradation. Catalyzes the phosphorolysis of single-stranded polyribonucleotides processively in the 3'- to 5'-direction. This chain is Polyribonucleotide nucleotidyltransferase, found in Aeromonas hydrophila subsp. hydrophila (strain ATCC 7966 / DSM 30187 / BCRC 13018 / CCUG 14551 / JCM 1027 / KCTC 2358 / NCIMB 9240 / NCTC 8049).